The following is a 712-amino-acid chain: Polyribonucleotide nucleotidyltransferase (712 aa).

Positions 484 and 490 each coordinate Mg(2+). One can recognise a KH domain in the interval 551-610 (PKVFTIQIHPDKIRDIIGPGGKVIRAIQAETGTRVDVDDSGLVKVSAVNLEEGEAALQMI). The region spanning 620–688 (GAVYEGTVVK…KDGKIRLSRK (69 aa)) is the S1 motif domain. Residues 689-712 (ALLEEENGKSGPENGAPQRDKNRH) form a disordered region.

It belongs to the polyribonucleotide nucleotidyltransferase family. Requires Mg(2+) as cofactor.

Its subcellular location is the cytoplasm. The catalysed reaction is RNA(n+1) + phosphate = RNA(n) + a ribonucleoside 5'-diphosphate. In terms of biological role, involved in mRNA degradation. Catalyzes the phosphorolysis of single-stranded polyribonucleotides processively in the 3'- to 5'-direction. The polypeptide is Polyribonucleotide nucleotidyltransferase (Desulfatibacillum aliphaticivorans).